We begin with the raw amino-acid sequence, 262 residues long: Acyl-[acyl-carrier-protein]--UDP-N-acetylglucosamine O-acyltransferase (262 aa).

It belongs to the transferase hexapeptide repeat family. LpxA subfamily. As to quaternary structure, homotrimer.

Its subcellular location is the cytoplasm. The catalysed reaction is a (3R)-hydroxyacyl-[ACP] + UDP-N-acetyl-alpha-D-glucosamine = a UDP-3-O-[(3R)-3-hydroxyacyl]-N-acetyl-alpha-D-glucosamine + holo-[ACP]. Its pathway is glycolipid biosynthesis; lipid IV(A) biosynthesis; lipid IV(A) from (3R)-3-hydroxytetradecanoyl-[acyl-carrier-protein] and UDP-N-acetyl-alpha-D-glucosamine: step 1/6. Its function is as follows. Involved in the biosynthesis of lipid A, a phosphorylated glycolipid that anchors the lipopolysaccharide to the outer membrane of the cell. The sequence is that of Acyl-[acyl-carrier-protein]--UDP-N-acetylglucosamine O-acyltransferase from Paracidovorax citrulli (strain AAC00-1) (Acidovorax citrulli).